We begin with the raw amino-acid sequence, 410 residues long: Multifunctional CCA protein (410 aa).

Residues Gly8 and Arg11 each coordinate ATP. CTP-binding residues include Gly8 and Arg11. 2 residues coordinate Mg(2+): Asp21 and Asp23. The ATP site is built by Arg91, Arg138, and Arg141. The CTP site is built by Arg91, Arg138, and Arg141. The 119-residue stretch at 229–347 (TGIHQEMVSD…AQLALVCEAD (119 aa)) folds into the HD domain.

This sequence belongs to the tRNA nucleotidyltransferase/poly(A) polymerase family. Bacterial CCA-adding enzyme type 1 subfamily. Monomer. Can also form homodimers and oligomers. Mg(2+) serves as cofactor. Requires Ni(2+) as cofactor.

The enzyme catalyses a tRNA precursor + 2 CTP + ATP = a tRNA with a 3' CCA end + 3 diphosphate. It carries out the reaction a tRNA with a 3' CCA end + 2 CTP + ATP = a tRNA with a 3' CCACCA end + 3 diphosphate. Functionally, catalyzes the addition and repair of the essential 3'-terminal CCA sequence in tRNAs without using a nucleic acid template. Adds these three nucleotides in the order of C, C, and A to the tRNA nucleotide-73, using CTP and ATP as substrates and producing inorganic pyrophosphate. tRNA 3'-terminal CCA addition is required both for tRNA processing and repair. Also involved in tRNA surveillance by mediating tandem CCA addition to generate a CCACCA at the 3' terminus of unstable tRNAs. While stable tRNAs receive only 3'-terminal CCA, unstable tRNAs are marked with CCACCA and rapidly degraded. The polypeptide is Multifunctional CCA protein (Xanthomonas euvesicatoria pv. vesicatoria (strain 85-10) (Xanthomonas campestris pv. vesicatoria)).